Here is a 384-residue protein sequence, read N- to C-terminus: Cytochrome b (384 aa).

Transmembrane regions (helical) follow at residues 32–52, 76–98, 113–133, and 179–199; these read VGSLLGLCLVIQIASGIFLAM, WLIRYIHANGASFFFICMYLHIG, LWVIGVIIFVVTMATAFMGYC, and FFALHFLLPFILAALVCMHLM. Heme b is bound by residues H82 and H96. The heme b site is built by H183 and H197. H202 provides a ligand contact to a ubiquinone. A run of 4 helical transmembrane segments spans residues 225–245, 289–309, 321–341, and 348–368; these read FIFKDLVTVFVFLLVFSLFVF, LGGVIAMFGAILILLTLPYTD, LSKFMFFLFLFNFILLGNLGQ, and YIELGQYATAFYFAYYLLIVP.

The protein belongs to the cytochrome b family. Fungal cytochrome b-c1 complex contains 10 subunits; 3 respiratory subunits, 2 core proteins and 5 low-molecular weight proteins. Cytochrome b-c1 complex is a homodimer. Requires heme b as cofactor.

It is found in the mitochondrion inner membrane. Its function is as follows. Component of the ubiquinol-cytochrome c reductase complex (complex III or cytochrome b-c1 complex) that is part of the mitochondrial respiratory chain. The b-c1 complex mediates electron transfer from ubiquinol to cytochrome c. Contributes to the generation of a proton gradient across the mitochondrial membrane that is then used for ATP synthesis. The polypeptide is Cytochrome b (COB) (Candida parapsilosis (Yeast)).